Here is a 237-residue protein sequence, read N- to C-terminus: Cytidylate kinase (237 aa).

15-23 (GPSGSGKGT) contacts ATP.

This sequence belongs to the cytidylate kinase family. Type 1 subfamily.

The protein resides in the cytoplasm. The catalysed reaction is CMP + ATP = CDP + ADP. It carries out the reaction dCMP + ATP = dCDP + ADP. The sequence is that of Cytidylate kinase from Coxiella burnetii (strain RSA 493 / Nine Mile phase I).